A 150-amino-acid chain; its full sequence is 5-hydroxytryptamine receptor 1B (150 aa).

Residues 1 to 83 (VEARSRILKQ…AARERKATKT (83 aa)) are Extracellular-facing. Residues 27-40 (DSPGSTSSVTSINS) show a composition bias toward polar residues. The tract at residues 27–50 (DSPGSTSSVTSINSRAPDLPSESG) is disordered. A helical transmembrane segment spans residues 84 to 105 (LGIILGAFIVCWLPFFIISLAM). Residues 106–115 (PICKDACWFH) are Cytoplasmic-facing. Residues 116-138 (LAIFDFFTWLGYLNSLINPIIYT) traverse the membrane as a helical segment. Residues 133–137 (NPIIY) carry the NPxxY motif; important for ligand-induced conformation changes and signaling motif. The Extracellular segment spans residues 139–150 (MFNEDFKQAFHK).

Belongs to the G-protein coupled receptor 1 family. As to quaternary structure, homodimer. Heterodimer with HTR1D. Phosphorylated. Desensitization of the receptor may be mediated by its phosphorylation. Post-translationally, palmitoylated.

The protein localises to the cell membrane. G-protein coupled receptor for 5-hydroxytryptamine (serotonin). Also functions as a receptor for ergot alkaloid derivatives, various anxiolytic and antidepressant drugs and other psychoactive substances, such as lysergic acid diethylamide (LSD). Ligand binding causes a conformation change that triggers signaling via guanine nucleotide-binding proteins (G proteins) and modulates the activity of downstream effectors, such as adenylate cyclase. HTR1B is coupled to G(i)/G(o) G alpha proteins and mediates inhibitory neurotransmission by inhibiting adenylate cyclase activity. Arrestin family members inhibit signaling via G proteins and mediate activation of alternative signaling pathways. Regulates the release of 5-hydroxytryptamine, dopamine and acetylcholine in the brain, and thereby affects neural activity, nociceptive processing, pain perception, mood and behavior. Besides, plays a role in vasoconstriction of cerebral arteries. This Sus scrofa (Pig) protein is 5-hydroxytryptamine receptor 1B (HTR1B).